Here is a 263-residue protein sequence, read N- to C-terminus: Indole-3-glycerol phosphate synthase (263 aa).

Belongs to the TrpC family.

The catalysed reaction is 1-(2-carboxyphenylamino)-1-deoxy-D-ribulose 5-phosphate + H(+) = (1S,2R)-1-C-(indol-3-yl)glycerol 3-phosphate + CO2 + H2O. The protein operates within amino-acid biosynthesis; L-tryptophan biosynthesis; L-tryptophan from chorismate: step 4/5. This is Indole-3-glycerol phosphate synthase from Polaromonas naphthalenivorans (strain CJ2).